The following is a 422-amino-acid chain: Phytoene synthase 1, chloroplastic (422 aa).

A chloroplast-targeting transit peptide spans 1–70; that stretch reads MSSSVAVLWV…NRSRRIGVVS (70 aa).

It belongs to the phytoene/squalene synthase family. In terms of assembly, monomer. Interacts with OR. Interacts with ORLIKE.

The protein localises to the plastid. It is found in the chloroplast membrane. The catalysed reaction is 2 (2E,6E,10E)-geranylgeranyl diphosphate = 15-cis-phytoene + 2 diphosphate. The protein operates within carotenoid biosynthesis; phytoene biosynthesis; all-trans-phytoene from geranylgeranyl diphosphate: step 1/1. Its function is as follows. Catalyzes the reaction from prephytoene diphosphate to phytoene. In Arabidopsis thaliana (Mouse-ear cress), this protein is Phytoene synthase 1, chloroplastic.